Reading from the N-terminus, the 425-residue chain is Dihydroorotase (425 aa).

Residues H61 and H63 each contribute to the Zn(2+) site. Residues 63 to 65 (HLR) and N95 contribute to the substrate site. Zn(2+) contacts are provided by D153, H180, and H233. Substrate is bound at residue N279. Zn(2+) is bound at residue D306. Residue D306 is part of the active site. Residue H310 participates in substrate binding.

The protein belongs to the metallo-dependent hydrolases superfamily. DHOase family. Class I DHOase subfamily. The cofactor is Zn(2+).

The catalysed reaction is (S)-dihydroorotate + H2O = N-carbamoyl-L-aspartate + H(+). The protein operates within pyrimidine metabolism; UMP biosynthesis via de novo pathway; (S)-dihydroorotate from bicarbonate: step 3/3. In terms of biological role, catalyzes the reversible cyclization of carbamoyl aspartate to dihydroorotate. In Trichlorobacter lovleyi (strain ATCC BAA-1151 / DSM 17278 / SZ) (Geobacter lovleyi), this protein is Dihydroorotase.